The chain runs to 404 residues: Cysteine desulfurase IscS (404 aa).

Pyridoxal 5'-phosphate is bound by residues 75 to 76 (AT), N155, Q183, and 203 to 205 (TGH). K206 bears the N6-(pyridoxal phosphate)lysine mark. T243 contacts pyridoxal 5'-phosphate. The Cysteine persulfide intermediate role is filled by C328. Residue C328 coordinates [2Fe-2S] cluster.

It belongs to the class-V pyridoxal-phosphate-dependent aminotransferase family. NifS/IscS subfamily. Homodimer. Forms a heterotetramer with IscU, interacts with other sulfur acceptors. Pyridoxal 5'-phosphate is required as a cofactor.

It localises to the cytoplasm. The catalysed reaction is (sulfur carrier)-H + L-cysteine = (sulfur carrier)-SH + L-alanine. The protein operates within cofactor biosynthesis; iron-sulfur cluster biosynthesis. Its function is as follows. Master enzyme that delivers sulfur to a number of partners involved in Fe-S cluster assembly, tRNA modification or cofactor biosynthesis. Catalyzes the removal of elemental sulfur atoms from cysteine to produce alanine. Functions as a sulfur delivery protein for Fe-S cluster synthesis onto IscU, an Fe-S scaffold assembly protein, as well as other S acceptor proteins. This chain is Cysteine desulfurase IscS, found in Enterobacter sp. (strain 638).